A 127-amino-acid chain; its full sequence is Large-conductance mechanosensitive channel (127 aa).

The next 3 membrane-spanning stretches (helical) occupy residues 9–29, 32–52, and 75–95; these read EFAMRGNVMDLAVAVVMGVAF, IVTALVDGIIMPCVGLLLGGV, and VIDFIIVAFAIFVLIKLINLL.

The protein belongs to the MscL family. In terms of assembly, homopentamer.

Its subcellular location is the cell inner membrane. Its function is as follows. Channel that opens in response to stretch forces in the membrane lipid bilayer. May participate in the regulation of osmotic pressure changes within the cell. The chain is Large-conductance mechanosensitive channel from Legionella pneumophila (strain Corby).